A 234-amino-acid polypeptide reads, in one-letter code: MGAQWKVKHKEAAANAKGRTFGKLSKEIMIAARAGADPDMNSRLRLVVEQAKKASMPRETLERAIKKGAGLLGESVNFERLTYEGFAPHRVPVIVECLTDNINRTVSEIRVLFRKGQLGAAGSVSWDFLYQGMIEAVPAAADADPELAAIEAGAQDFESAEEGATLFLTESTDMDAVCKALPEFGFTVQSAQLGYRPKSTVDGLTEEQMAEVEAFLEAIDNHDDVQNVYVGLAG.

This sequence belongs to the TACO1 family.

It localises to the cytoplasm. The chain is Probable transcriptional regulatory protein PSPPH_2212 from Pseudomonas savastanoi pv. phaseolicola (strain 1448A / Race 6) (Pseudomonas syringae pv. phaseolicola (strain 1448A / Race 6)).